Consider the following 198-residue polypeptide: Ribonuclease HII (198 aa).

The 190-residue stretch at 6 to 195 (RRVAGVDEVG…VHHMLYQDKN (190 aa)) folds into the RNase H type-2 domain. Residues Asp-12, Glu-13, and Asp-103 each contribute to the a divalent metal cation site.

This sequence belongs to the RNase HII family. It depends on Mn(2+) as a cofactor. The cofactor is Mg(2+).

The protein resides in the cytoplasm. It carries out the reaction Endonucleolytic cleavage to 5'-phosphomonoester.. Its function is as follows. Endonuclease that specifically degrades the RNA of RNA-DNA hybrids. The protein is Ribonuclease HII of Roseobacter denitrificans (strain ATCC 33942 / OCh 114) (Erythrobacter sp. (strain OCh 114)).